Reading from the N-terminus, the 187-residue chain is Oligoribonuclease (187 aa).

The 164-residue stretch at 7 to 170 folds into the Exonuclease domain; it reads LIWIDLEMTG…DDIKDSINEL (164 aa). Tyrosine 128 is a catalytic residue.

Belongs to the oligoribonuclease family.

It localises to the cytoplasm. 3'-to-5' exoribonuclease specific for small oligoribonucleotides. The protein is Oligoribonuclease of Legionella pneumophila (strain Paris).